A 535-amino-acid polypeptide reads, in one-letter code: Ribonuclease Y (535 aa).

The chain crosses the membrane as a helical span at residues 4-24 (IILLIVSALIGLILGYALISI). Residues 118–141 (ENLSSKEKVLDSKEQSLTDKSKHI) are disordered. The KH domain maps to 225–285 (TITSVHLPDD…IRREIARMTL (61 aa)). Residues 351–444 (VLRHSVEVGK…VAAADALSSA (94 aa)) enclose the HD domain.

Belongs to the RNase Y family.

The protein localises to the cell membrane. Its function is as follows. Endoribonuclease that initiates mRNA decay. The protein is Ribonuclease Y of Streptococcus pyogenes serotype M18 (strain MGAS8232).